Reading from the N-terminus, the 154-residue chain is Xanthine-guanine phosphoribosyltransferase (154 aa).

5-phospho-alpha-D-ribose 1-diphosphate contacts are provided by residues 37 to 38 (RG), Arg-69, and 88 to 96 (DDLVDSGDT). Arg-69 lines the GMP pocket. Mg(2+) is bound at residue Asp-89. Positions 92 and 135 each coordinate guanine. The xanthine site is built by Asp-92 and Ile-135. Residues 92–96 (DSGDT) and 134–135 (WI) contribute to the GMP site.

Belongs to the purine/pyrimidine phosphoribosyltransferase family. XGPT subfamily. Homotetramer. Requires Mg(2+) as cofactor.

The protein resides in the cell inner membrane. The enzyme catalyses GMP + diphosphate = guanine + 5-phospho-alpha-D-ribose 1-diphosphate. The catalysed reaction is XMP + diphosphate = xanthine + 5-phospho-alpha-D-ribose 1-diphosphate. It carries out the reaction IMP + diphosphate = hypoxanthine + 5-phospho-alpha-D-ribose 1-diphosphate. Its pathway is purine metabolism; GMP biosynthesis via salvage pathway; GMP from guanine: step 1/1. It functions in the pathway purine metabolism; XMP biosynthesis via salvage pathway; XMP from xanthine: step 1/1. In terms of biological role, purine salvage pathway enzyme that catalyzes the transfer of the ribosyl-5-phosphate group from 5-phospho-alpha-D-ribose 1-diphosphate (PRPP) to the N9 position of the 6-oxopurines guanine and xanthine to form the corresponding ribonucleotides GMP (guanosine 5'-monophosphate) and XMP (xanthosine 5'-monophosphate), with the release of PPi. To a lesser extent, also acts on hypoxanthine. The protein is Xanthine-guanine phosphoribosyltransferase of Vibrio cholerae serotype O1 (strain ATCC 39541 / Classical Ogawa 395 / O395).